We begin with the raw amino-acid sequence, 423 residues long: Pleckstrin homology domain-containing family O member 1 (423 aa).

3 disordered regions span residues 1 to 21 (MEKNNSAKRGQQDGNQQSAQP), 81 to 100 (RKSKSRSKKNHSKFTLAHSR), and 217 to 277 (LAAG…HSEK). A compositionally biased stretch (polar residues) spans 7 to 20 (AKRGQQDGNQQSAQ). The PH domain occupies 20-131 (QPEKVGWVRK…WINALNSAIT (112 aa)). Residues 83 to 92 (SKSRSKKNHS) show a composition bias toward basic residues. The span at 222-259 (RRSDSENVKLSEKGRSGTLPRHEVTSWDKPTQRKDSLD) shows a compositional bias: basic and acidic residues.

C-terminal fragments could be released during apoptosis via caspase-3-dependent cleavage.

It localises to the membrane. Its subcellular location is the nucleus. It is found in the cytoplasm. Its function is as follows. Plays a role in the regulation of the actin cytoskeleton through its interactions with actin capping protein (CP). In Gallus gallus (Chicken), this protein is Pleckstrin homology domain-containing family O member 1 (PLEKHO1).